Consider the following 1284-residue polypeptide: DNA topoisomerase 2, mitochondrial (1284 aa).

A mitochondrion-targeting transit peptide spans 1–35 (MSKLLNNNNHKNLTNYLKFGKGIINNLNNKSKQVG). ATP-binding positions include N183, N212, 240-242 (GSN), and 253-260 (GRNGFGAK). The tract at residues 445 to 447 (KKK) is interaction with DNA. 478 to 480 (QSK) provides a ligand contact to ATP. The Toprim domain maps to 560 to 677 (CTLIITEGDS…NLLKRGFLVE (118 aa)). Mg(2+)-binding residues include E566, D646, and D648. Positions 810–1232 (IPSLIDGLKP…DPKSLWTADL (423 aa)) constitute a Topo IIA-type catalytic domain. Y900 (O-(5'-phospho-DNA)-tyrosine intermediate) is an active-site residue. A disordered region spans residues 1245 to 1284 (EFQKKPLKTSSSSSFDVSSSSESAKLSSTRKSKTDKIKSK). Over residues 1254 to 1271 (SSSSSFDVSSSSESAKLS) the composition is skewed to low complexity.

This sequence belongs to the type II topoisomerase family. As to quaternary structure, homodimer. The cofactor is Mg(2+). Mn(2+) is required as a cofactor. Ca(2+) serves as cofactor.

The protein resides in the mitochondrion. It catalyses the reaction ATP-dependent breakage, passage and rejoining of double-stranded DNA.. In terms of biological role, control of topological states of DNA by transient breakage and subsequent rejoining of DNA strands. Topoisomerase II makes double-strand breaks. The chain is DNA topoisomerase 2, mitochondrial (top2mt) from Dictyostelium discoideum (Social amoeba).